The chain runs to 436 residues: Trigger factor (436 aa).

A PPIase FKBP-type domain is found at 163-248 (GDQVIIDFVG…VHSVQTKVLP (86 aa)).

Belongs to the FKBP-type PPIase family. Tig subfamily.

The protein localises to the cytoplasm. It catalyses the reaction [protein]-peptidylproline (omega=180) = [protein]-peptidylproline (omega=0). Involved in protein export. Acts as a chaperone by maintaining the newly synthesized protein in an open conformation. Functions as a peptidyl-prolyl cis-trans isomerase. This chain is Trigger factor, found in Hydrogenovibrio crunogenus (strain DSM 25203 / XCL-2) (Thiomicrospira crunogena).